The following is a 585-amino-acid chain: Arginine--tRNA ligase (585 aa).

The 'HIGH' region motif lies at 131 to 141 (ANPTGPMHVGH).

It belongs to the class-I aminoacyl-tRNA synthetase family. Monomer.

It is found in the cytoplasm. The catalysed reaction is tRNA(Arg) + L-arginine + ATP = L-arginyl-tRNA(Arg) + AMP + diphosphate. This is Arginine--tRNA ligase from Allorhizobium ampelinum (strain ATCC BAA-846 / DSM 112012 / S4) (Agrobacterium vitis (strain S4)).